Consider the following 232-residue polypeptide: 7-cyano-7-deazaguanine synthase (232 aa).

8–18 (FSGGQDSTTCL) contributes to the ATP binding site. 4 residues coordinate Zn(2+): C189, C198, C201, and C204.

Belongs to the QueC family. Zn(2+) is required as a cofactor.

The catalysed reaction is 7-carboxy-7-deazaguanine + NH4(+) + ATP = 7-cyano-7-deazaguanine + ADP + phosphate + H2O + H(+). It participates in purine metabolism; 7-cyano-7-deazaguanine biosynthesis. Catalyzes the ATP-dependent conversion of 7-carboxy-7-deazaguanine (CDG) to 7-cyano-7-deazaguanine (preQ(0)). The chain is 7-cyano-7-deazaguanine synthase from Serratia proteamaculans (strain 568).